The following is a 447-amino-acid chain: Protein cereblon (447 aa).

Acidic residues-rich tracts occupy residues 1–10 (MADDEGEEDP) and 25–34 (ESEEEDEMEL). Positions 1–47 (MADDEGEEDPGINNMGNLLQVISSESEEEDEMELEDAKTADSESPNI) are disordered. Positions 82–322 (IPVLPHVQVM…CELDIMSKCT (241 aa)) constitute a Lon N-terminal domain. Residues 321–429 (CTSLCCKHCP…LTRSALQPRI (109 aa)) form the CULT domain. Positions 326 and 329 each coordinate Zn(2+). The (S)-thalidomide site is built by Trp-383 and Trp-389. Zn(2+)-binding residues include Cys-394 and Cys-397.

This sequence belongs to the CRBN family. Component of a DCX (DDB1-CUL4-X-box) protein ligase complex.

Its subcellular location is the cytoplasm. It localises to the nucleus. Its pathway is protein modification; protein ubiquitination. Its function is as follows. Substrate recognition component of a DCX (DDB1-CUL4-X-box) E3 protein ligase complex that mediates the ubiquitination and subsequent proteasomal degradation of target proteins, such as MEIS2. Normal degradation of key regulatory proteins is required for normal limb outgrowth and expression of the fibroblast growth factor FGF8. Maintains presynaptic glutamate release and consequently cognitive functions, such as memory and learning, by negatively regulating large-conductance calcium-activated potassium (BK) channels in excitatory neurons. Likely to function by regulating the assembly and neuronal surface expression of BK channels via its interaction with KCNT1. May also be involved in regulating anxiety-like behaviors via a BK channel-independent mechanism. In Xenopus tropicalis (Western clawed frog), this protein is Protein cereblon (crbn).